The sequence spans 158 residues: Ribosome maturation factor RimP (158 aa).

The protein belongs to the RimP family.

The protein localises to the cytoplasm. Its function is as follows. Required for maturation of 30S ribosomal subunits. The polypeptide is Ribosome maturation factor RimP (Pseudomonas fluorescens (strain Pf0-1)).